The chain runs to 200 residues: Dephospho-CoA kinase (200 aa).

In terms of domain architecture, DPCK spans 2–200; the sequence is LIAVVGKAGV…CHHGHYQTPK (199 aa). 10-15 is an ATP binding site; sequence GVGKTT.

The protein belongs to the CoaE family.

Its subcellular location is the cytoplasm. The catalysed reaction is 3'-dephospho-CoA + ATP = ADP + CoA + H(+). Its pathway is cofactor biosynthesis; coenzyme A biosynthesis; CoA from (R)-pantothenate: step 5/5. Functionally, catalyzes the phosphorylation of the 3'-hydroxyl group of dephosphocoenzyme A to form coenzyme A. This is Dephospho-CoA kinase from Mycoplasma pneumoniae (strain ATCC 29342 / M129 / Subtype 1) (Mycoplasmoides pneumoniae).